Reading from the N-terminus, the 701-residue chain is Elongation factor G (701 aa).

Positions 11 to 287 (SRVRNFGIMA…AVVDYLPSPL (277 aa)) constitute a tr-type G domain. GTP-binding positions include 20-27 (AHIDAGKT), 84-88 (DTPGH), and 138-141 (NKMD).

This sequence belongs to the TRAFAC class translation factor GTPase superfamily. Classic translation factor GTPase family. EF-G/EF-2 subfamily.

It localises to the cytoplasm. Its function is as follows. Catalyzes the GTP-dependent ribosomal translocation step during translation elongation. During this step, the ribosome changes from the pre-translocational (PRE) to the post-translocational (POST) state as the newly formed A-site-bound peptidyl-tRNA and P-site-bound deacylated tRNA move to the P and E sites, respectively. Catalyzes the coordinated movement of the two tRNA molecules, the mRNA and conformational changes in the ribosome. The protein is Elongation factor G (fusA) of Mycobacterium tuberculosis (strain CDC 1551 / Oshkosh).